Reading from the N-terminus, the 462-residue chain is NADH-quinone oxidoreductase subunit N 1 (462 aa).

Transmembrane regions (helical) follow at residues 4-24 (FVVAYFPHLCLAFGGLLVLCL), 32-52 (AGFYPATAALFAALPGLWAVA), 60-80 (IACFYAGLLSVIALATIALLA), 88-108 (FAGDALYGLLLWSALGMLLLA), 113-133 (WIMLAVGLELASLCLYALIAA), 148-168 (FLPGAMALAVLLFGMALIYAA), 178-198 (LAAPGPLTAAGLALVLVGVGF), 220-240 (VAAFLSSGSKAAAAAALLHVC), 251-271 (LWPALAVGAGLTMAVGNLGAV), 279-299 (LLAYSSIAQMGYILMAAMAVN), 307-327 (LFYLAAFALMDLAAFGAVGAL), 351-371 (AGVLAIGLASLAGLPPTAGFV), 374-394 (FLVFGAALSAGYVGLAAFGII), 416-436 (LIAHPAAVYAAGPAGTLALGV), and 439-459 (AGLVGLGLFPQTLLGAIAALF).

The protein belongs to the complex I subunit 2 family. In terms of assembly, NDH-1 is composed of 14 different subunits. Subunits NuoA, H, J, K, L, M, N constitute the membrane sector of the complex.

The protein resides in the cell inner membrane. It carries out the reaction a quinone + NADH + 5 H(+)(in) = a quinol + NAD(+) + 4 H(+)(out). Functionally, NDH-1 shuttles electrons from NADH, via FMN and iron-sulfur (Fe-S) centers, to quinones in the respiratory chain. The immediate electron acceptor for the enzyme in this species is believed to be ubiquinone. Couples the redox reaction to proton translocation (for every two electrons transferred, four hydrogen ions are translocated across the cytoplasmic membrane), and thus conserves the redox energy in a proton gradient. This is NADH-quinone oxidoreductase subunit N 1 from Solidesulfovibrio magneticus (strain ATCC 700980 / DSM 13731 / RS-1) (Desulfovibrio magneticus).